The primary structure comprises 397 residues: Elongation factor Tu-1 (397 aa).

The region spanning 10–206 is the tr-type G domain; the sequence is KPHVNIGTIG…AVDESIPEPE (197 aa). The interval 19–26 is G1; that stretch reads GHIDHGKT. 19-26 is a GTP binding site; it reads GHIDHGKT. Residue T26 participates in Mg(2+) binding. The G2 stretch occupies residues 62–66; sequence GITIS. Positions 83–86 are G3; the sequence is DCPG. GTP-binding positions include 83 to 87 and 138 to 141; these read DCPGH and NKAD. The interval 138–141 is G4; that stretch reads NKAD. The tract at residues 176–178 is G5; that stretch reads SAL.

This sequence belongs to the TRAFAC class translation factor GTPase superfamily. Classic translation factor GTPase family. EF-Tu/EF-1A subfamily. As to quaternary structure, monomer.

It is found in the cytoplasm. The catalysed reaction is GTP + H2O = GDP + phosphate + H(+). Its function is as follows. GTP hydrolase that promotes the GTP-dependent binding of aminoacyl-tRNA to the A-site of ribosomes during protein biosynthesis. In Streptomyces ramocissimus, this protein is Elongation factor Tu-1.